We begin with the raw amino-acid sequence, 242 residues long: Myogenic factor 6 (242 aa).

Residues 31–63 (SPLYPGSDGTLSPCQDQMPQEAGSDSSGEEHVL) form a disordered region. The segment covering 39 to 56 (GTLSPCQDQMPQEAGSDS) has biased composition (polar residues). In terms of domain architecture, bHLH spans 93 to 144 (DRRKAATLRERRRLKKINEAFEALKRRTVANPNQRLPKVEILRSAISYIERL).

Efficient DNA binding requires dimerization with another bHLH protein. Interacts with CSRP3. In terms of tissue distribution, skeletal muscle.

It localises to the nucleus. Involved in muscle differentiation (myogenic factor). Induces fibroblasts to differentiate into myoblasts. Probable sequence specific DNA-binding protein. In Mus musculus (Mouse), this protein is Myogenic factor 6 (Myf6).